The following is a 366-amino-acid chain: S-adenosylmethionine:tRNA ribosyltransferase-isomerase (366 aa).

This sequence belongs to the QueA family. Monomer.

It localises to the cytoplasm. The enzyme catalyses 7-aminomethyl-7-carbaguanosine(34) in tRNA + S-adenosyl-L-methionine = epoxyqueuosine(34) in tRNA + adenine + L-methionine + 2 H(+). It functions in the pathway tRNA modification; tRNA-queuosine biosynthesis. In terms of biological role, transfers and isomerizes the ribose moiety from AdoMet to the 7-aminomethyl group of 7-deazaguanine (preQ1-tRNA) to give epoxyqueuosine (oQ-tRNA). The polypeptide is S-adenosylmethionine:tRNA ribosyltransferase-isomerase (Parasynechococcus marenigrum (strain WH8102)).